Reading from the N-terminus, the 466-residue chain is tRNA modification GTPase MnmE (466 aa).

(6S)-5-formyl-5,6,7,8-tetrahydrofolate-binding residues include Arg23, Glu86, and Lys125. The TrmE-type G domain maps to 221–388 (GIPVAIVGEP…LKNELLSFVN (168 aa)). Asn231 lines the K(+) pocket. GTP is bound by residues 231 to 236 (NVGKST), 250 to 256 (SDIAGTT), and 275 to 278 (DTAG). Ser235 contributes to the Mg(2+) binding site. Positions 250, 252, and 255 each coordinate K(+). Thr256 is a binding site for Mg(2+). Lys466 contributes to the (6S)-5-formyl-5,6,7,8-tetrahydrofolate binding site.

Belongs to the TRAFAC class TrmE-Era-EngA-EngB-Septin-like GTPase superfamily. TrmE GTPase family. As to quaternary structure, homodimer. Heterotetramer of two MnmE and two MnmG subunits. Requires K(+) as cofactor.

It is found in the cytoplasm. Its function is as follows. Exhibits a very high intrinsic GTPase hydrolysis rate. Involved in the addition of a carboxymethylaminomethyl (cmnm) group at the wobble position (U34) of certain tRNAs, forming tRNA-cmnm(5)s(2)U34. This chain is tRNA modification GTPase MnmE, found in Flavobacterium johnsoniae (strain ATCC 17061 / DSM 2064 / JCM 8514 / BCRC 14874 / CCUG 350202 / NBRC 14942 / NCIMB 11054 / UW101) (Cytophaga johnsonae).